A 316-amino-acid chain; its full sequence is uncharacterized protein (316 aa).

The segment at 1 to 34 (MATKRKIGDGYSSSDDNQPKRERSEGGEDQQLVP) is disordered. A compositionally biased stretch (basic and acidic residues) spans 17 to 26 (NQPKRERSEG).

This is an uncharacterized protein from Lepidoptera (butterflies and moths).